Consider the following 629-residue polypeptide: tRNA uridine 5-carboxymethylaminomethyl modification enzyme MnmG (629 aa).

13 to 18 (GGGHAG) provides a ligand contact to FAD. 273–287 (GPRYCPSIEDKITRF) contributes to the NAD(+) binding site.

Belongs to the MnmG family. As to quaternary structure, homodimer. Heterotetramer of two MnmE and two MnmG subunits. FAD is required as a cofactor.

The protein resides in the cytoplasm. Its function is as follows. NAD-binding protein involved in the addition of a carboxymethylaminomethyl (cmnm) group at the wobble position (U34) of certain tRNAs, forming tRNA-cmnm(5)s(2)U34. This Aeromonas salmonicida (strain A449) protein is tRNA uridine 5-carboxymethylaminomethyl modification enzyme MnmG.